We begin with the raw amino-acid sequence, 150 residues long: CCAAT/enhancer-binding protein gamma (150 aa).

Lysine 3 is covalently cross-linked (Glycyl lysine isopeptide (Lys-Gly) (interchain with G-Cter in SUMO2)). The segment at 27–94 is disordered; sequence GLQQVPQLVP…QKAQDTLQRV (68 aa). Residues 28 to 37 show a composition bias toward low complexity; it reads LQQVPQLVPA. A compositionally biased stretch (basic and acidic residues) spans 56–72; sequence SPMDRNSDEYRQRRERN. The bZIP domain occupies 62-125; sequence SDEYRQRRER…SVLKDLFLEH (64 aa). The basic motif stretch occupies residues 66-93; the sequence is RQRRERNNMAVKKSRLKSKQKAQDTLQR. The leucine-zipper stretch occupies residues 97-118; it reads LKEENERLEAKIKLLTKELSVL. Positions 129-150 are disordered; that stretch reads LADNVQPISTETTATNSDNPGQ. The span at 134 to 150 shows a compositional bias: polar residues; that stretch reads QPISTETTATNSDNPGQ.

This sequence belongs to the bZIP family. C/EBP subfamily. As to quaternary structure, binds DNA as a dimer and can form stable heterodimers with CEBPA. Can form stable heterodimers with CEBPB. Interacts with ZNF638; this interaction increases transcriptional activation. Ubiquitous.

It is found in the nucleus. Functionally, transcription factor that binds to the promoter and the enhancer regions of target genes. Binds to the promoter and the enhancer of the immunoglobulin heavy chain. Binds to GPE1, a cis-acting element in the G-CSF gene promoter. Binds to the enhancer element PRE-I (positive regulatory element-I) of the IL-4 gene. Binds to the promoter and the enhancer of the alpha-1-fetoprotein gene. In Mus musculus (Mouse), this protein is CCAAT/enhancer-binding protein gamma (Cebpg).